The chain runs to 631 residues: Anthrax toxin receptor-like (631 aa).

Positions 1–27 (MGSHESLGPYFLVFLLLLLLPPPLFRA) are cleaved as a signal peptide. The Extracellular portion of the chain corresponds to 28 to 353 (GSLRYHGPDW…TSTTCGIFRN (326 aa)). A VWFA domain is found at 76 to 246 (DLYFILDKSG…KALRSTIDAL (171 aa)). 3 residues coordinate a divalent metal cation: Ser84, Ser86, and Thr150. A helical transmembrane segment spans residues 354 to 374 (WLYFVPLLLLVPLLLCCVWRL). Residues 375 to 631 (CRKQTVKEPP…LSLPPSEPNF (257 aa)) lie on the Cytoplasmic side of the membrane. The tract at residues 382-413 (EPPPVQKPEKEPEQEKPPSPPPPPPPPPPPLP) is disordered. The segment covering 388–397 (KPEKEPEQEK) has biased composition (basic and acidic residues). The span at 398 to 413 (PPSPPPPPPPPPPPLP) shows a compositional bias: pro residues.

The protein belongs to the ATR family.

The protein localises to the membrane. The chain is Anthrax toxin receptor-like (ANTXRL) from Homo sapiens (Human).